Reading from the N-terminus, the 666-residue chain is Fructose-1,6-bisphosphatase class 3 (666 aa).

The protein belongs to the FBPase class 3 family. Requires Mn(2+) as cofactor.

The catalysed reaction is beta-D-fructose 1,6-bisphosphate + H2O = beta-D-fructose 6-phosphate + phosphate. Its pathway is carbohydrate biosynthesis; gluconeogenesis. The polypeptide is Fructose-1,6-bisphosphatase class 3 (Phocaeicola vulgatus (strain ATCC 8482 / DSM 1447 / JCM 5826 / CCUG 4940 / NBRC 14291 / NCTC 11154) (Bacteroides vulgatus)).